A 595-amino-acid polypeptide reads, in one-letter code: Ketol-acid reductoisomerase, chloroplastic (595 aa).

The N-terminal 72 residues, Met1–Met72, are a transit peptide targeting the chloroplast. The 199-residue stretch at Val108–Thr306 folds into the KARI N-terminal Rossmann domain. NADP(+) contacts are provided by residues Gly129–Gln136, Arg162–Ser167, and Ser201–Gln205. Residue His226 is part of the active site. KARI C-terminal knotted domains follow at residues Thr307–Gly455 and Asp456–Leu592. Residues Asp315, Glu319, Glu492, and Glu496 each contribute to the Mg(2+) site. Ser518 contributes to the substrate binding site.

Belongs to the ketol-acid reductoisomerase family. As to quaternary structure, homodimer. It depends on Mg(2+) as a cofactor.

It is found in the plastid. The protein resides in the chloroplast. It carries out the reaction (2R)-2,3-dihydroxy-3-methylbutanoate + NADP(+) = (2S)-2-acetolactate + NADPH + H(+). It catalyses the reaction (2R,3R)-2,3-dihydroxy-3-methylpentanoate + NADP(+) = (S)-2-ethyl-2-hydroxy-3-oxobutanoate + NADPH + H(+). It participates in amino-acid biosynthesis; L-isoleucine biosynthesis; L-isoleucine from 2-oxobutanoate: step 2/4. The protein operates within amino-acid biosynthesis; L-valine biosynthesis; L-valine from pyruvate: step 2/4. The polypeptide is Ketol-acid reductoisomerase, chloroplastic (AHRI) (Spinacia oleracea (Spinach)).